A 498-amino-acid polypeptide reads, in one-letter code: Cytochrome P450 71D15 (498 aa).

Residues 3–23 (LLQLWSALIILVVTYTISLLI) traverse the membrane as a helical; Signal-anchor for type II membrane protein segment. Residue cysteine 437 participates in heme binding.

Belongs to the cytochrome P450 family. Heme serves as cofactor.

The protein resides in the endoplasmic reticulum membrane. The catalysed reaction is (4S)-limonene + reduced [NADPH--hemoprotein reductase] + O2 = (1S,6R)-isopiperitenol + oxidized [NADPH--hemoprotein reductase] + H2O + H(+). Functionally, hydroxylates (-)-(4S)-limonene to (-)-trans-isopiperitenol, a precursor of (-)-menthol, responsible for the cooling sensation of peppermint. Fluorinated substrate analogs are hydroxylated with the same regio- and stereochemistry. This Mentha piperita (Peppermint) protein is Cytochrome P450 71D15 (CYP71D15).